A 444-amino-acid chain; its full sequence is Glutamate--tRNA ligase 2 (444 aa).

A 'HIGH' region motif is present at residues 7–17 (PSPTGYLHVGN). Positions 240–244 (KLSKR) match the 'KMSKS' region motif. ATP is bound at residue lysine 243.

Belongs to the class-I aminoacyl-tRNA synthetase family. Glutamate--tRNA ligase type 1 subfamily. As to quaternary structure, monomer.

Its subcellular location is the cytoplasm. It carries out the reaction tRNA(Glu) + L-glutamate + ATP = L-glutamyl-tRNA(Glu) + AMP + diphosphate. In terms of biological role, catalyzes the attachment of glutamate to tRNA(Glu) in a two-step reaction: glutamate is first activated by ATP to form Glu-AMP and then transferred to the acceptor end of tRNA(Glu). The sequence is that of Glutamate--tRNA ligase 2 from Gluconobacter oxydans (strain 621H) (Gluconobacter suboxydans).